A 298-amino-acid chain; its full sequence is Bifunctional protein FolD (298 aa).

NADP(+) contacts are provided by residues glycine 166 to serine 168, serine 191, and isoleucine 232.

It belongs to the tetrahydrofolate dehydrogenase/cyclohydrolase family. As to quaternary structure, homodimer.

The catalysed reaction is (6R)-5,10-methylene-5,6,7,8-tetrahydrofolate + NADP(+) = (6R)-5,10-methenyltetrahydrofolate + NADPH. The enzyme catalyses (6R)-5,10-methenyltetrahydrofolate + H2O = (6R)-10-formyltetrahydrofolate + H(+). It functions in the pathway one-carbon metabolism; tetrahydrofolate interconversion. Its function is as follows. Catalyzes the oxidation of 5,10-methylenetetrahydrofolate to 5,10-methenyltetrahydrofolate and then the hydrolysis of 5,10-methenyltetrahydrofolate to 10-formyltetrahydrofolate. This Parvibaculum lavamentivorans (strain DS-1 / DSM 13023 / NCIMB 13966) protein is Bifunctional protein FolD.